The sequence spans 314 residues: Acetaldehyde dehydrogenase 3 (314 aa).

Cysteine 132 functions as the Acyl-thioester intermediate in the catalytic mechanism. NAD(+) contacts are provided by residues 163 to 171 (SAGPGTRAN) and asparagine 291.

The protein belongs to the acetaldehyde dehydrogenase family.

It catalyses the reaction acetaldehyde + NAD(+) + CoA = acetyl-CoA + NADH + H(+). This Dechloromonas aromatica (strain RCB) protein is Acetaldehyde dehydrogenase 3.